We begin with the raw amino-acid sequence, 550 residues long: Probable acyl-activating enzyme 9 (550 aa).

It belongs to the ATP-dependent AMP-binding enzyme family. Expressed in leaves, flowers and developing seeds.

Functionally, may act as an acid--thiol ligase that activates carboxylic acids by forming acyl-CoAs. This chain is Probable acyl-activating enzyme 9 (AEE9), found in Arabidopsis thaliana (Mouse-ear cress).